A 296-amino-acid polypeptide reads, in one-letter code: 4-hydroxybenzoate octaprenyltransferase (296 aa).

8 consecutive transmembrane segments (helical) span residues 28-48 (IGTLLLLWPTYWALWLASDGI), 51-71 (LAVLAAFTIGTFLMRSAGCVI), 102-122 (LLLTAFLCLLAALCLIPLNHL), 143-163 (FFPIPQFYLGFAFSFGIPMAF), 174-194 (AWILFAANVLWTLAYDTVYAM), 212-232 (FGRYDIAAVMLCHGGFTLLMA), 233-253 (VLGAVIGAAWAYWTAIPIVLL), and 274-294 (FLANNRIGWVWFAAIFAHTFF).

It belongs to the UbiA prenyltransferase family. The cofactor is Mg(2+).

The protein localises to the cell inner membrane. It catalyses the reaction all-trans-octaprenyl diphosphate + 4-hydroxybenzoate = 4-hydroxy-3-(all-trans-octaprenyl)benzoate + diphosphate. It participates in cofactor biosynthesis; ubiquinone biosynthesis. In terms of biological role, catalyzes the prenylation of para-hydroxybenzoate (PHB) with an all-trans polyprenyl group. Mediates the second step in the final reaction sequence of ubiquinone-8 (UQ-8) biosynthesis, which is the condensation of the polyisoprenoid side chain with PHB, generating the first membrane-bound Q intermediate 3-octaprenyl-4-hydroxybenzoate. The polypeptide is 4-hydroxybenzoate octaprenyltransferase (Neisseria gonorrhoeae (strain ATCC 700825 / FA 1090)).